The following is a 303-amino-acid chain: MKLVLFLNMGGATNLQDCEVFLKNMFNDPYILGIKNRFLRKFVAWIITKARVKAMQENYKKMGGKSPLNELTQSLCDKLNLKQDEFKFDFVNLYVPPFATEILQKYTLNASDEIILFPLYPHHSCTTVTSSLEVLQNEISKQKIQAKVKTIDIFYKNELYNEMIVSHILDKKSKFDAKILIFSAHSLPQSIIDKGDLYEKHVNDHVEILKEKLKDHFDEFILAYQSKLGPVKWLEPNTSDVLANLNDKALIYPISFCIDCSETIFELGMEYKHLAKCDYDLISCPNNSDEFMKFILKYLSDLN.

Residues His185 and Glu262 each coordinate Fe cation.

This sequence belongs to the ferrochelatase family.

It localises to the cytoplasm. It catalyses the reaction heme b + 2 H(+) = protoporphyrin IX + Fe(2+). Its pathway is porphyrin-containing compound metabolism; protoheme biosynthesis; protoheme from protoporphyrin-IX: step 1/1. In terms of biological role, catalyzes the ferrous insertion into protoporphyrin IX. In Campylobacter jejuni (strain RM1221), this protein is Ferrochelatase.